The following is a 268-amino-acid chain: Phosphatidylglycerol--prolipoprotein diacylglyceryl transferase (268 aa).

A run of 7 helical transmembrane segments spans residues 10–30 (VALAIGPLKIHWYGLMYLIGI), 56–76 (LVFWLSMGVIVGGRLGYVLFY), 92–112 (WKGGMSFHGGFIGVMLAALWF), 120–140 (FFELMDFVAPLVPIGLGAGRI), 174–194 (PSQLYQFALEGVALFVILWLF), 202–222 (MAVSGMFALFYGIFRFIVEFV), and 236–256 (WLTMGQILCVPMILAGLGLIW). Arg-139 is an a 1,2-diacyl-sn-glycero-3-phospho-(1'-sn-glycerol) binding site.

The protein belongs to the Lgt family.

Its subcellular location is the cell inner membrane. The catalysed reaction is L-cysteinyl-[prolipoprotein] + a 1,2-diacyl-sn-glycero-3-phospho-(1'-sn-glycerol) = an S-1,2-diacyl-sn-glyceryl-L-cysteinyl-[prolipoprotein] + sn-glycerol 1-phosphate + H(+). It participates in protein modification; lipoprotein biosynthesis (diacylglyceryl transfer). Functionally, catalyzes the transfer of the diacylglyceryl group from phosphatidylglycerol to the sulfhydryl group of the N-terminal cysteine of a prolipoprotein, the first step in the formation of mature lipoproteins. This chain is Phosphatidylglycerol--prolipoprotein diacylglyceryl transferase, found in Pseudomonas putida (strain ATCC 700007 / DSM 6899 / JCM 31910 / BCRC 17059 / LMG 24140 / F1).